The following is a 754-amino-acid chain: C2H2 finger domain transcription factor crzA (754 aa).

5 disordered regions span residues 1 to 51 (MASQ…TVTG), 63 to 150 (SFAN…FSDL), 187 to 227 (VHQQ…QGST), 269 to 299 (QGHR…FDGV), and 384 to 543 (GAEG…RVQK). Over residues 30–44 (HQQQQQQQHQQHQGQ) the composition is skewed to low complexity. Polar residues-rich tracts occupy residues 63–80 (SFAN…SPSA) and 94–114 (TPAS…QSYG). Residues 130–140 (QQQSQQQHHQQ) show a composition bias toward low complexity. Polar residues predominate over residues 141–150 (PSLDDNFSDL). The span at 189–209 (QQSHPTQIPSSHSSTSPQISP) shows a compositional bias: low complexity. 2 stretches are compositionally biased toward polar residues: residues 210 to 227 (LEQQ…QGST) and 279 to 293 (SEIS…LSQH). 2 stretches are compositionally biased toward low complexity: residues 459-472 (STSR…SSSL) and 491-515 (RQQQ…STSS). C2H2-type zinc fingers lie at residues 548–570 (FQCN…LRTH) and 576–598 (FVCT…EGLH). The segment at 604–635 (FVCQGELSRGGQWGCGRRFARADALGRHFRSE) adopts a C2H2-type 3; degenerate zinc-finger fold. The interval 708–737 (ADDPSDIGGRSSFDASSGNEFGFEDDDSGL) is disordered.

Its subcellular location is the nucleus. The protein resides in the cytoplasm. In terms of biological role, transcription factor involved in the regulation of calcium ion homeostasis. Regulates genes encoding calcium transporters, transcription factors and genes that could be directly or indirectly involved in calcium metabolism. Supports especially pmcA, pmcB and pmcC expression encoding for calcium-translocating P-type ATPases. Binds target promoters at motif A[GT][CG]CA[AC][AG]. Plays an essential role germination, radial growth, and asexual development. Also plays a major role in proper chitin and glucan incorporation into the cell wall. Involved in the high-osmolarity glycerol response (HOG) signaling pathway. Required for pathogenicity in an experimental murine model of invasive pulmonary aspergillosis. The polypeptide is C2H2 finger domain transcription factor crzA (Aspergillus fumigatus (strain ATCC MYA-4609 / CBS 101355 / FGSC A1100 / Af293) (Neosartorya fumigata)).